The sequence spans 285 residues: MEMVLQRTSHHPVPGEQQEAAAELSSAELRRGPWTVDEDLTLINYISDHGEGRWNALARAAGLKRTGKSCRLRWLNYLRPDVKRGNFTAEEQLLILDLHSRWGNRWSKIAQHLPGRTDNEIKNYWRTRVQKHAKQLNCDVNSKRFKDAMKYLWMPRLAERIHARAGAVDDSGDYSNNDLSCVSGVTMATVANCFDGSPSMVTSSSSDSFTSESQDLKKINLHVHGDDEKMNSEDWMQEVDHEFWSTEIQPNNEQFQDQQLNGWVQGFSEGLSETLWSLEDIWKMQ.

2 consecutive HTH myb-type domains span residues 26 to 78 (SAEL…LNYL) and 79 to 133 (RPDV…QKHA). DNA-binding regions (H-T-H motif) lie at residues 54–78 (WNAL…LNYL) and 106–129 (WSKI…RTRV).

The protein resides in the nucleus. In terms of biological role, probable transcription factor that may be involved in the jasmonate-dependent defense responses to the rice blast fungus Magnaporthe oryzae. Does not seem to function in the salicylic acid-dependent signaling pathway. This is Transcription factor JAMYB from Oryza sativa subsp. japonica (Rice).